Here is a 506-residue protein sequence, read N- to C-terminus: GMP synthase [glutamine-hydrolyzing] (506 aa).

A Glutamine amidotransferase type-1 domain is found at 2 to 190 (SIVILDFGSQ…FLDICGVTRD (189 aa)). Catalysis depends on Cys79, which acts as the Nucleophile. Catalysis depends on residues His165 and Glu167. Residues 191–381 (WNAEHIVDEL…LGLPDHIRMR (191 aa)) enclose the GMPS ATP-PPase domain. 219–225 (SGGVDSS) serves as a coordination point for ATP.

As to quaternary structure, homodimer.

It catalyses the reaction XMP + L-glutamine + ATP + H2O = GMP + L-glutamate + AMP + diphosphate + 2 H(+). It participates in purine metabolism; GMP biosynthesis; GMP from XMP (L-Gln route): step 1/1. In terms of biological role, catalyzes the synthesis of GMP from XMP. The protein is GMP synthase [glutamine-hydrolyzing] (guaA) of Deinococcus radiodurans (strain ATCC 13939 / DSM 20539 / JCM 16871 / CCUG 27074 / LMG 4051 / NBRC 15346 / NCIMB 9279 / VKM B-1422 / R1).